The sequence spans 91 residues: Probable Fe(2+)-trafficking protein (91 aa).

This sequence belongs to the Fe(2+)-trafficking protein family.

In terms of biological role, could be a mediator in iron transactions between iron acquisition and iron-requiring processes, such as synthesis and/or repair of Fe-S clusters in biosynthetic enzymes. In Shewanella amazonensis (strain ATCC BAA-1098 / SB2B), this protein is Probable Fe(2+)-trafficking protein.